Consider the following 255-residue polypeptide: Tumor necrosis factor receptor superfamily member 9 (255 aa).

A signal peptide spans 1–23 (MGNSCYNIVATLLLVLNFERTRS). 4 TNFR-Cys repeats span residues 24–45 (LQDPCSNCPAGTFCDNNRNQIC), 47–86 (PCPPNSFSSAGGQRTCDICRQCKGVFRTRKECSSTSNAEC), 87–118 (DCTPGFHCLGAGCSMCEQDCKQGQELTKKGCK), and 119–159 (DCCF…VVCG). At 24–186 (LQDPCSNCPA…PAREPGHSPQ (163 aa)) the chain is on the extracellular side. Disulfide bonds link Cys-28–Cys-37, Cys-31–Cys-45, Cys-48–Cys-62, Cys-65–Cys-78, Cys-68–Cys-86, Cys-88–Cys-94, Cys-99–Cys-106, Cys-102–Cys-117, and Cys-121–Cys-133. Asn-138 and Asn-149 each carry an N-linked (GlcNAc...) asparagine glycan. Cys-139 and Cys-158 are oxidised to a cystine. The interval 161–180 (SPADLSPGASSVTPPAPARE) is disordered. A helical transmembrane segment spans residues 187-213 (IISFFLALTSTALLFLLFFLTLRFSVV). Over 214–255 (KRGRKKLLYIFKQPFMRPVQTTQEEDGCSCRFPEEEEGGCEL) the chain is Cytoplasmic. The interval 214–255 (KRGRKKLLYIFKQPFMRPVQTTQEEDGCSCRFPEEEEGGCEL) is interaction with LRR-1.

In terms of assembly, predominantly homodimeric, but may also exist as a monomer. Interacts with TRAF1, TRAF2 and TRAF3. Interacts with LRR-repeat protein 1/LRR-1. In terms of tissue distribution, expressed on the surface of activated T-cells.

It is found in the cell membrane. Receptor for TNFSF9/4-1BBL. Conveys a signal that enhances CD8(+) T-cell survival, cytotoxicity, and mitochondrial activity, thereby promoting immunity against viruses and tumors. This Homo sapiens (Human) protein is Tumor necrosis factor receptor superfamily member 9 (TNFRSF9).